Reading from the N-terminus, the 87-residue chain is Putative regulatory protein BH2513 (87 aa).

Belongs to the RemA family.

The protein is Putative regulatory protein BH2513 of Halalkalibacterium halodurans (strain ATCC BAA-125 / DSM 18197 / FERM 7344 / JCM 9153 / C-125) (Bacillus halodurans).